The chain runs to 378 residues: MAHDMRWCVGLMTGTVLDGNIDVALLQTDGERIGAFGPHALYPYDAGTNALLKQCLSAAQTWAFNGPEPAIFAEAEARITRAQSDAVACLVETAGLSMRDIAAVGFHGQTVLHRAPAPGRLGQTRQLGNGQDMARRLATDVVYDFRSADMKAGGQGAPLSAIYHSALLDTLDNAHDTAILNLGGVANITARDARGMLAAFDTGPANAPINDFVVHRGLGEMDRDGQLAAQGRVDDARFSTALRHPYLSRPYPKSLDRFDFGHDWVADLSDADGAATLTAFTASAVGRGLDLLPVRPTRLIVCGGGRRNPTLLKMIATYAKVHVDNAEDWGWEGDATEAQCFGYLAMRRLRDLPVTFAETTGVRAPMPAGRIAHGSSPG.

14-22 (GTVLDGNID) is a binding site for ATP.

The protein belongs to the anhydro-N-acetylmuramic acid kinase family.

The catalysed reaction is 1,6-anhydro-N-acetyl-beta-muramate + ATP + H2O = N-acetyl-D-muramate 6-phosphate + ADP + H(+). It functions in the pathway amino-sugar metabolism; 1,6-anhydro-N-acetylmuramate degradation. The protein operates within cell wall biogenesis; peptidoglycan recycling. Its function is as follows. Catalyzes the specific phosphorylation of 1,6-anhydro-N-acetylmuramic acid (anhMurNAc) with the simultaneous cleavage of the 1,6-anhydro ring, generating MurNAc-6-P. Is required for the utilization of anhMurNAc either imported from the medium or derived from its own cell wall murein, and thus plays a role in cell wall recycling. The polypeptide is Anhydro-N-acetylmuramic acid kinase 2 (Jannaschia sp. (strain CCS1)).